Consider the following 180-residue polypeptide: Inner membrane-spanning protein YciB (180 aa).

6 helical membrane passes run 4 to 24 (FLSE…GGGI), 25 to 45 (QHAT…CYVI), 49 to 69 (VSKL…ITLI), 76 to 96 (IKIK…MSGI), 118 to 138 (ITLS…NEVV), and 150 to 170 (FKVF…LPLL).

It belongs to the YciB family.

Its subcellular location is the cell inner membrane. Functionally, plays a role in cell envelope biogenesis, maintenance of cell envelope integrity and membrane homeostasis. This Rickettsia rickettsii (strain Iowa) protein is Inner membrane-spanning protein YciB.